The following is a 271-amino-acid chain: 2-dehydro-3-deoxyphosphooctonate aldolase (271 aa).

Belongs to the KdsA family.

It is found in the cytoplasm. The enzyme catalyses D-arabinose 5-phosphate + phosphoenolpyruvate + H2O = 3-deoxy-alpha-D-manno-2-octulosonate-8-phosphate + phosphate. It functions in the pathway carbohydrate biosynthesis; 3-deoxy-D-manno-octulosonate biosynthesis; 3-deoxy-D-manno-octulosonate from D-ribulose 5-phosphate: step 2/3. Its pathway is bacterial outer membrane biogenesis; lipopolysaccharide biosynthesis. The sequence is that of 2-dehydro-3-deoxyphosphooctonate aldolase from Campylobacter jejuni subsp. jejuni serotype O:23/36 (strain 81-176).